We begin with the raw amino-acid sequence, 136 residues long: Small ribosomal subunit protein uS12 (136 aa).

The tract at residues 1–28 is disordered; sequence MPTIQQLIRSERQELKKKTKSPALKSCP. Aspartate 89 carries the post-translational modification 3-methylthioaspartic acid. Positions 101-136 are disordered; that stretch reads TLDTAGVKDRKQGRSKYGAKRPKPGAASTASTGKKR. Basic residues predominate over residues 113 to 123; sequence GRSKYGAKRPK.

Belongs to the universal ribosomal protein uS12 family. Part of the 30S ribosomal subunit. Contacts proteins S8 and S17. May interact with IF1 in the 30S initiation complex.

With S4 and S5 plays an important role in translational accuracy. In terms of biological role, interacts with and stabilizes bases of the 16S rRNA that are involved in tRNA selection in the A site and with the mRNA backbone. Located at the interface of the 30S and 50S subunits, it traverses the body of the 30S subunit contacting proteins on the other side and probably holding the rRNA structure together. The combined cluster of proteins S8, S12 and S17 appears to hold together the shoulder and platform of the 30S subunit. This chain is Small ribosomal subunit protein uS12, found in Cyanothece sp. (strain PCC 7425 / ATCC 29141).